A 306-amino-acid polypeptide reads, in one-letter code: D-alanine--D-alanine ligase (306 aa).

Residues 101–303 (KQVWQGIGLT…FSQLVVKILE (203 aa)) form the ATP-grasp domain. 134 to 189 (VADLGLPLIVKPSLEGSSVGMTKVNEISELRGALEAAFRYDVDLLVEKWLHGPEYT) is a binding site for ATP. The Mg(2+) site is built by aspartate 257, glutamate 270, and asparagine 272.

The protein belongs to the D-alanine--D-alanine ligase family. The cofactor is Mg(2+). It depends on Mn(2+) as a cofactor.

The protein localises to the cytoplasm. The enzyme catalyses 2 D-alanine + ATP = D-alanyl-D-alanine + ADP + phosphate + H(+). The protein operates within cell wall biogenesis; peptidoglycan biosynthesis. Its function is as follows. Cell wall formation. The polypeptide is D-alanine--D-alanine ligase (Photorhabdus laumondii subsp. laumondii (strain DSM 15139 / CIP 105565 / TT01) (Photorhabdus luminescens subsp. laumondii)).